We begin with the raw amino-acid sequence, 389 residues long: Stilbene synthase 3 (389 aa).

Residue 55-58 coordinates substrate; that stretch reads KFQR. Residue C164 is part of the active site. Substrate is bound by residues L267 and 305-307; that span reads GGR.

Belongs to the thiolase-like superfamily. Chalcone/stilbene synthases family. As to quaternary structure, homodimer.

It is found in the cytoplasm. The catalysed reaction is 4-coumaroyl-CoA + 3 malonyl-CoA + 3 H(+) = trans-resveratrol + 4 CO2 + 4 CoA. Its pathway is phytoalexin biosynthesis; 3,4',5-trihydroxystilbene biosynthesis; 3,4',5-trihydroxystilbene from trans-4-coumarate: step 2/2. The chain is Stilbene synthase 3 from Arachis hypogaea (Peanut).